Reading from the N-terminus, the 504-residue chain is Maturase K (504 aa).

The protein belongs to the intron maturase 2 family. MatK subfamily.

It is found in the plastid. The protein localises to the chloroplast. Usually encoded in the trnK tRNA gene intron. Probably assists in splicing its own and other chloroplast group II introns. This Nepenthes alata (Winged pitcher plant) protein is Maturase K.